The following is a 144-amino-acid chain: Nucleoside diphosphate kinase (144 aa).

K11, F59, R87, T93, R104, and N114 together coordinate ATP. The active-site Pros-phosphohistidine intermediate is the H117.

Belongs to the NDK family. As to quaternary structure, homotetramer. Requires Mg(2+) as cofactor.

It is found in the cytoplasm. The catalysed reaction is a 2'-deoxyribonucleoside 5'-diphosphate + ATP = a 2'-deoxyribonucleoside 5'-triphosphate + ADP. It carries out the reaction a ribonucleoside 5'-diphosphate + ATP = a ribonucleoside 5'-triphosphate + ADP. Major role in the synthesis of nucleoside triphosphates other than ATP. The ATP gamma phosphate is transferred to the NDP beta phosphate via a ping-pong mechanism, using a phosphorylated active-site intermediate. This Aliivibrio salmonicida (strain LFI1238) (Vibrio salmonicida (strain LFI1238)) protein is Nucleoside diphosphate kinase.